Consider the following 3582-residue polypeptide: Ubiquitin carboxyl-terminal hydrolase 34 (3582 aa).

4 positions are modified to phosphoserine: S352, S486, S487, and S490. Disordered regions lie at residues 503 to 533 (EEEE…HQSG), 551 to 670 (QQRL…ELRN), 682 to 705 (GESQ…VFNT), 775 to 801 (HHHH…DGHM), and 1496 to 1515 (TGSY…DQVE). A compositionally biased stretch (low complexity) spans 510–524 (AAPSPWSPAASPQSS). The span at 560–570 (SMQGSSDETAN) shows a compositional bias: polar residues. Over residues 571 to 590 (SGEDGSSGPGSSSGHSDGSS) the composition is skewed to low complexity. Positions 591-609 (NEVNSSHASQSAGSPGSEV) are enriched in polar residues. Residues 610–653 (QSEDIADIEALKEEEEEEEEEEEEEEEEDDEEEEDEEEDDDDDD) show a composition bias toward acidic residues. A compositionally biased stretch (polar residues) spans 684–697 (SQGTSERNGTNSGT). A compositionally biased stretch (basic residues) spans 775–798 (HHHHHHHHHHHHHHHHHHHHHHHD). Over residues 1504–1514 (PDSDDSSEDQV) the composition is skewed to acidic residues. S1506 carries the phosphoserine modification. The 346-residue stretch at 1931–2276 (VGLTNLGATC…SAYMLFYKRM (346 aa)) folds into the USP domain. Residue C1940 is the Nucleophile of the active site. H2201 acts as the Proton acceptor in catalysis. S2525 carries the phosphoserine modification. A disordered region spans residues 3369-3484 (SLQEQEAKER…QSNNGRFDDC (116 aa)). Residues 3373 to 3384 (QEAKERKTKDDE) are compositionally biased toward basic and acidic residues. S3395 and S3396 each carry phosphoserine. Phosphothreonine is present on T3418. Phosphoserine is present on residues S3423 and S3443. Residues 3463 to 3484 (DGSHIRSQHAEEQSNNGRFDDC) are compositionally biased toward basic and acidic residues. Phosphoserine is present on S3539.

This sequence belongs to the peptidase C19 family. In terms of assembly, interacts with AXIN1 and AXIN2.

The enzyme catalyses Thiol-dependent hydrolysis of ester, thioester, amide, peptide and isopeptide bonds formed by the C-terminal Gly of ubiquitin (a 76-residue protein attached to proteins as an intracellular targeting signal).. Its function is as follows. Ubiquitin hydrolase that can remove conjugated ubiquitin from AXIN1 and AXIN2, thereby acting as a regulator of Wnt signaling pathway. Acts as an activator of the Wnt signaling pathway downstream of the beta-catenin destruction complex by deubiquitinating and stabilizing AXIN1 and AXIN2, leading to promote nuclear accumulation of AXIN1 and AXIN2 and positively regulate beta-catenin (CTNBB1)-mediated transcription. Recognizes and hydrolyzes the peptide bond at the C-terminal Gly of ubiquitin. Involved in the processing of poly-ubiquitin precursors as well as that of ubiquitinated proteins. In Mus musculus (Mouse), this protein is Ubiquitin carboxyl-terminal hydrolase 34 (Usp34).